A 430-amino-acid chain; its full sequence is Adenylosuccinate synthetase (430 aa).

GTP is bound by residues 12 to 18 (GDEGKGK) and 40 to 42 (GHT). Asp-13 (proton acceptor) is an active-site residue. Mg(2+) is bound by residues Asp-13 and Gly-40. IMP contacts are provided by residues 13–16 (DEGK), 38–41 (NAGH), Thr-130, Arg-144, Gln-224, Thr-239, and Arg-303. Catalysis depends on His-41, which acts as the Proton donor. 299–305 (VNTGRKR) contacts substrate. GTP contacts are provided by residues Arg-305, 331 to 333 (KLD), and 413 to 415 (STS).

The protein belongs to the adenylosuccinate synthetase family. In terms of assembly, homodimer. Mg(2+) serves as cofactor.

The protein localises to the cytoplasm. It carries out the reaction IMP + L-aspartate + GTP = N(6)-(1,2-dicarboxyethyl)-AMP + GDP + phosphate + 2 H(+). It participates in purine metabolism; AMP biosynthesis via de novo pathway; AMP from IMP: step 1/2. Plays an important role in the de novo pathway of purine nucleotide biosynthesis. Catalyzes the first committed step in the biosynthesis of AMP from IMP. This Rhodopseudomonas palustris (strain ATCC BAA-98 / CGA009) protein is Adenylosuccinate synthetase.